A 343-amino-acid chain; its full sequence is Biotin synthase (343 aa).

The Radical SAM core domain occupies 36 to 254 (NTIQISTLLS…IAVARIMMPK (219 aa)). Positions 51, 55, and 58 each coordinate [4Fe-4S] cluster. Positions 95, 126, 186, and 258 each coordinate [2Fe-2S] cluster.

It belongs to the radical SAM superfamily. Biotin synthase family. As to quaternary structure, homodimer. It depends on [4Fe-4S] cluster as a cofactor. [2Fe-2S] cluster is required as a cofactor.

It catalyses the reaction (4R,5S)-dethiobiotin + (sulfur carrier)-SH + 2 reduced [2Fe-2S]-[ferredoxin] + 2 S-adenosyl-L-methionine = (sulfur carrier)-H + biotin + 2 5'-deoxyadenosine + 2 L-methionine + 2 oxidized [2Fe-2S]-[ferredoxin]. Its pathway is cofactor biosynthesis; biotin biosynthesis; biotin from 7,8-diaminononanoate: step 2/2. In terms of biological role, catalyzes the conversion of dethiobiotin (DTB) to biotin by the insertion of a sulfur atom into dethiobiotin via a radical-based mechanism. The chain is Biotin synthase from Buchnera aphidicola subsp. Acyrthosiphon pisum (strain 5A).